The chain runs to 363 residues: Phosphatidylinositol transfer protein sfh-5 (363 aa).

Residues 1–84 (MSTQPSDSAE…SPADIKDSVS (84 aa)) are disordered. Basic and acidic residues predominate over residues 36-46 (DAAKHAEEEPK). Low complexity predominate over residues 64–76 (KPAAAPAQEADSP). The CRAL-TRIO domain maps to 180 to 354 (AGDEPAVDEP…EYGGKGADLK (175 aa)). Positions 200, 220, 253, 255, and 289 each coordinate heme.

It belongs to the SFH5 family. Heme b serves as cofactor.

The protein resides in the cytoplasm. It is found in the endoplasmic reticulum membrane. The protein localises to the microsome membrane. The catalysed reaction is a 1,2-diacyl-sn-glycero-3-phospho-(1D-myo-inositol)(in) = a 1,2-diacyl-sn-glycero-3-phospho-(1D-myo-inositol)(out). Functionally, non-classical phosphatidylinositol (PtdIns) transfer protein (PITP), which exhibits PtdIns-binding/transfer activity in the absence of detectable PtdCho-binding/transfer activity. Regulates PtdIns(4,5)P2 homeostasis at the plasma membrane. Heme-binding protein that may play a role in organic oxidant-induced stress responses. The sequence is that of Phosphatidylinositol transfer protein sfh-5 (sfh-5) from Neurospora crassa (strain ATCC 24698 / 74-OR23-1A / CBS 708.71 / DSM 1257 / FGSC 987).